The following is a 443-amino-acid chain: Alpha-amylase (443 aa).

An N-terminal signal peptide occupies residues 1 to 24; that stretch reads MHNTLFRTALLAAALGSFSHTASA. Substrate-binding residues include His114 and Arg196. Residue Asp198 is the Nucleophile of the active site. 201-202 provides a ligand contact to substrate; sequence KH. The active-site Proton donor is Glu223. Residues Gly228 and His287 each coordinate substrate.

The protein belongs to the glycosyl hydrolase 13 family.

The protein resides in the secreted. The catalysed reaction is Endohydrolysis of (1-&gt;4)-alpha-D-glucosidic linkages in polysaccharides containing three or more (1-&gt;4)-alpha-linked D-glucose units.. This is Alpha-amylase (amyA) from Aeromonas hydrophila.